Consider the following 330-residue polypeptide: Aspartate--ammonia ligase (330 aa).

This sequence belongs to the class-II aminoacyl-tRNA synthetase family. AsnA subfamily.

Its subcellular location is the cytoplasm. The enzyme catalyses L-aspartate + NH4(+) + ATP = L-asparagine + AMP + diphosphate + H(+). It functions in the pathway amino-acid biosynthesis; L-asparagine biosynthesis; L-asparagine from L-aspartate (ammonia route): step 1/1. The protein is Aspartate--ammonia ligase of Shigella sonnei (strain Ss046).